A 323-amino-acid chain; its full sequence is RNA polymerase sigma factor SigB (323 aa).

The segment at 1-228 is sufficient to interact with RbpA; it reads MADAPTRATT…DMPVGSEEEA (228 aa). The tract at residues 25–59 is sigma-70 factor domain-1; the sequence is DLVRVYLNGIGKTALLNAAGEVELAKRIEAGLYAE. The segment at 90 to 160 is sigma-70 factor domain-2; that stretch reads LLEANLRLVV…TRGMADQSRT (71 aa). Residues 114–117 carry the Polymerase core binding motif; it reads DLIQ. A sigma-70 factor domain-3 region spans residues 169-245; sequence EQVNKLARIK…DAEAMSAENA (77 aa). The interval 258 to 311 is sigma-70 factor domain-4; the sequence is VLATLDEREHQVIRLRFGLDDGQPRTLDQIGKLFGLSRERVRQIERDVMSKLRH. The H-T-H motif DNA-binding region spans 284–303; that stretch reads LDQIGKLFGLSRERVRQIER.

Belongs to the sigma-70 factor family. As to quaternary structure, monomer. Interacts transiently with the RNA polymerase catalytic core formed by RpoA, RpoB, RpoC and RpoZ (2 alpha, 1 beta, 1 beta' and 1 omega subunit) to form the RNA polymerase holoenzyme that can initiate transcription.

Sigma factors are initiation factors that promote the attachment of RNA polymerase to specific initiation sites and are then released. A non-essential principal sigma factor that responds to cell envelope stress and hypoxia. This chain is RNA polymerase sigma factor SigB (sigB), found in Mycobacterium tuberculosis (strain CDC 1551 / Oshkosh).